Reading from the N-terminus, the 198-residue chain is MIGKCTHVVDCRETMGMGEGGGIAQRGTFAQCGSEVLAVAMSPGRRHITKPVCEITFALREANIMTSTLVLNAGAGVPQDAPSAGAGSLFGLTPAEVEQMKRHRLLVVHLGGVKNHITYKARLILRNVDRPCIVICEYPVDFEDFAKIGVKTRVVMPDEPKTKGTIVDIVSGVIRGETCPQEKLDEIIRKVKLALGGA.

MCR is composed of three subunits: alpha, beta, and gamma. The function of proteins C and D is not known.

The protein is Methyl-coenzyme M reductase I operon protein C (mcrC) of Methanothermobacter marburgensis (strain ATCC BAA-927 / DSM 2133 / JCM 14651 / NBRC 100331 / OCM 82 / Marburg) (Methanobacterium thermoautotrophicum).